The chain runs to 158 residues: Phosphopantetheine adenylyltransferase (158 aa).

Position 10 (Thr-10) interacts with substrate. Residues 10 to 11 (TF) and His-18 each bind ATP. Residues Lys-42, Leu-74, and Arg-88 each contribute to the substrate site. Residues 89-91 (GLR), Glu-99, and 124-130 (YSFISSS) contribute to the ATP site.

This sequence belongs to the bacterial CoaD family. In terms of assembly, homohexamer. The cofactor is Mg(2+).

It is found in the cytoplasm. It carries out the reaction (R)-4'-phosphopantetheine + ATP + H(+) = 3'-dephospho-CoA + diphosphate. The protein operates within cofactor biosynthesis; coenzyme A biosynthesis; CoA from (R)-pantothenate: step 4/5. Its function is as follows. Reversibly transfers an adenylyl group from ATP to 4'-phosphopantetheine, yielding dephospho-CoA (dPCoA) and pyrophosphate. The chain is Phosphopantetheine adenylyltransferase from Erwinia tasmaniensis (strain DSM 17950 / CFBP 7177 / CIP 109463 / NCPPB 4357 / Et1/99).